Consider the following 166-residue polypeptide: Phosphopantetheine adenylyltransferase (166 aa).

Position 9 (S9) interacts with substrate. Residues 9–10 and H17 contribute to the ATP site; that span reads SF. Positions 41, 74, and 88 each coordinate substrate. ATP-binding positions include 89–91, E99, and 123–129; these read GLR and YVHLSST.

The protein belongs to the bacterial CoaD family. As to quaternary structure, homohexamer. It depends on Mg(2+) as a cofactor.

It localises to the cytoplasm. The catalysed reaction is (R)-4'-phosphopantetheine + ATP + H(+) = 3'-dephospho-CoA + diphosphate. The protein operates within cofactor biosynthesis; coenzyme A biosynthesis; CoA from (R)-pantothenate: step 4/5. In terms of biological role, reversibly transfers an adenylyl group from ATP to 4'-phosphopantetheine, yielding dephospho-CoA (dPCoA) and pyrophosphate. In Paenarthrobacter aurescens (strain TC1), this protein is Phosphopantetheine adenylyltransferase.